The following is a 115-amino-acid chain: Large ribosomal subunit protein uL22c (115 aa).

Belongs to the universal ribosomal protein uL22 family. Part of the 50S ribosomal subunit.

Its subcellular location is the plastid. It localises to the chloroplast. Functionally, this protein binds specifically to 23S rRNA. Its function is as follows. The globular domain of the protein is located near the polypeptide exit tunnel on the outside of the subunit, while an extended beta-hairpin is found that lines the wall of the exit tunnel in the center of the 70S ribosome. The sequence is that of Large ribosomal subunit protein uL22c (rpl22) from Phaeodactylum tricornutum (strain CCAP 1055/1).